Here is a 143-residue protein sequence, read N- to C-terminus: Ponticulin (143 aa).

The first 22 residues, 1 to 22 (MLVLRNLLALVTLALLFTLSSA), serve as a signal peptide directing secretion. A glycan (N-linked (GlcNAc...) asparagine) is linked at Asn-111. A lipid anchor (GPI-like-anchor amidated serine) is attached at Ser-118. Residues 119–143 (SSGSTVMIGLASSLLFAFATLLALF) constitute a propeptide, removed in mature form.

Belongs to the ponticulin family. In terms of assembly, monomer. Disulfide bond(s) stabilize the native, actin-binding conformation of ponticulin. In terms of processing, the GPI-like-anchor contains a phosphoceramide group, rather than a phosphatidyl group.

The protein resides in the cell membrane. Its function is as follows. Binds F-actin and nucleates actin assembly. Major high affinity link between the plasma membrane and the cortical actin network. This Dictyostelium discoideum (Social amoeba) protein is Ponticulin (ponA).